Here is a 305-residue protein sequence, read N- to C-terminus: Probable cell division protein WhiA (305 aa).

Residues Thr-269 to Lys-302 constitute a DNA-binding region (H-T-H motif).

It belongs to the WhiA family.

In terms of biological role, involved in cell division and chromosome segregation. The protein is Probable cell division protein WhiA of Lactococcus lactis subsp. cremoris (strain MG1363).